The primary structure comprises 156 residues: Small ribosomal subunit protein uS7 (156 aa).

It belongs to the universal ribosomal protein uS7 family. Part of the 30S ribosomal subunit. Contacts proteins S9 and S11.

Functionally, one of the primary rRNA binding proteins, it binds directly to 16S rRNA where it nucleates assembly of the head domain of the 30S subunit. Is located at the subunit interface close to the decoding center, probably blocks exit of the E-site tRNA. This is Small ribosomal subunit protein uS7 from Thermomicrobium roseum (strain ATCC 27502 / DSM 5159 / P-2).